The sequence spans 181 residues: ATP synthase subunit delta (181 aa).

This sequence belongs to the ATPase delta chain family. F-type ATPases have 2 components, F(1) - the catalytic core - and F(0) - the membrane proton channel. F(1) has five subunits: alpha(3), beta(3), gamma(1), delta(1), epsilon(1). F(0) has three main subunits: a(1), b(2) and c(10-14). The alpha and beta chains form an alternating ring which encloses part of the gamma chain. F(1) is attached to F(0) by a central stalk formed by the gamma and epsilon chains, while a peripheral stalk is formed by the delta and b chains.

It is found in the cell membrane. In terms of biological role, f(1)F(0) ATP synthase produces ATP from ADP in the presence of a proton or sodium gradient. F-type ATPases consist of two structural domains, F(1) containing the extramembraneous catalytic core and F(0) containing the membrane proton channel, linked together by a central stalk and a peripheral stalk. During catalysis, ATP synthesis in the catalytic domain of F(1) is coupled via a rotary mechanism of the central stalk subunits to proton translocation. Its function is as follows. This protein is part of the stalk that links CF(0) to CF(1). It either transmits conformational changes from CF(0) to CF(1) or is implicated in proton conduction. The sequence is that of ATP synthase subunit delta from Clostridioides difficile (strain 630) (Peptoclostridium difficile).